The sequence spans 249 residues: Ribonuclease PH (249 aa).

Residues Arg-86 and 124-126 (GTR) each bind phosphate.

The protein belongs to the RNase PH family. In terms of assembly, homohexameric ring arranged as a trimer of dimers.

The enzyme catalyses tRNA(n+1) + phosphate = tRNA(n) + a ribonucleoside 5'-diphosphate. Functionally, phosphorolytic 3'-5' exoribonuclease that plays an important role in tRNA 3'-end maturation. Removes nucleotide residues following the 3'-CCA terminus of tRNAs; can also add nucleotides to the ends of RNA molecules by using nucleoside diphosphates as substrates, but this may not be physiologically important. Probably plays a role in initiation of 16S rRNA degradation (leading to ribosome degradation) during starvation. This is Ribonuclease PH from Clostridium botulinum (strain Alaska E43 / Type E3).